Reading from the N-terminus, the 297-residue chain is MQKEKIVVLYGGDSPEREVSLKSGKAVLDSLLNQGYDAVGLDASSKDLVVKLLELNPDKCFIALHGEDGENGRVAALLELLGIKHTGSTMKSCVVTMDKMISKEILMHHRMPTPMAKFLTDRLVEADEISFPVAVKPSSGGSSIATFKVKSLEELENAYQQASKHGEVMIEQWVTGKEITVAIVNNDVYSSVWIEPLNEFYDYESKYSGKSIYHAPSGLCEQKELEVRQLAKKAYDLLGCKGHARVDFIYDDKGDFYIMEINSSPGMTENSLSPKSAAAEGIDFDSFVKSILEQAQC.

Residues 103-293 (KEILMHHRMP…FDSFVKSILE (191 aa)) enclose the ATP-grasp domain. 129–180 (ISFPVAVKPSSGGSSIATFKVKSLEELENAYQQASKHGEVMIEQWVTGKEIT) serves as a coordination point for ATP. Residues Asp247, Glu260, and Asn262 each coordinate Mg(2+).

This sequence belongs to the D-alanine--D-alanine ligase family. It depends on Mg(2+) as a cofactor. Mn(2+) is required as a cofactor.

The protein resides in the cytoplasm. It carries out the reaction 2 D-alanine + ATP = D-alanyl-D-alanine + ADP + phosphate + H(+). Its pathway is cell wall biogenesis; peptidoglycan biosynthesis. Functionally, cell wall formation. In Francisella philomiragia subsp. philomiragia (strain ATCC 25017 / CCUG 19701 / FSC 153 / O#319-036), this protein is D-alanine--D-alanine ligase.